The chain runs to 284 residues: Proline-rich protein 32 (284 aa).

Disordered regions lie at residues arginine 59–histidine 80, glutamate 97–glutamine 119, and serine 143–proline 171.

This is Proline-rich protein 32 (Prr32) from Mus musculus (Mouse).